A 631-amino-acid polypeptide reads, in one-letter code: MMANNSTSFFVNLAGNVSQQAARFSNSIANMANKNVSSLNKVSRAISAVSKGFNGLGNITIPIIGVGAAAGATMVGKSMLRTAADFEMAKIRMKQTFGEQGEAADAWLKKFATDTPMAFADTQDAMMRLKTAGIDPMNGSLQALVDYNAKVGGDKANLDGYISAISKGFIKGKLSMEEINPLLERNVKVFEILAKETGGKYTADQMQKMLQEGKLGRKAIHALLRGMGRDAQGAAKEQMKTWDGLVSNLEDTWTSMQARFMEHGAFDALKKELGDFVEWLNEKIDDGTLDDFPKTVSDTLIEALKNLKEMAKDVKPVLESIGSVMSWVSEKAGGYGNLAKFMGALYLGNKVLRNDKVQTLGGWGWSGAKWGYNKIFNRKKGGAGGLADGVAGALGATVGVTPVYVTNFPMGFGGGGGGGYGYDVIEDGRDKDKKTQKKNKPPRPKRGRGSVRSPVAAVAASAAAVPKVAAPVTTASSGVARSVGNGVKSLGRGASKAVPYLGTGLAVAEGVTVLMDDTTNTKEKSEAIGSIAGATAGAIVGQALIPIPVVGAAVGSYLGGWLGEWLGSEVGEYLSDPEPIKNELNGTINIAVKASDQLIATATQAKIQTNQQRDSLETAVQMGTLGMGGMW.

2 helical membrane-spanning segments follow: residues L56 to G76 and G385 to V405. The interval I425–S453 is disordered. Residues K434–G449 are compositionally biased toward basic residues. Helical transmembrane passes span V455–A475, S495–M515, and A543–G563.

It to phage Mu protein gp42.

Its subcellular location is the cell membrane. This is Mu-like prophage FluMu protein gp42 from Haemophilus influenzae (strain ATCC 51907 / DSM 11121 / KW20 / Rd).